The following is a 248-amino-acid chain: Adenosylcobinamide-GDP ribazoletransferase (248 aa).

6 helical membrane passes run 28–48, 103–123, 126–146, 169–189, 193–213, and 225–245; these read LFWF…AGYL, VGSF…IVLV, LAFG…LVQV, AGIQ…LLLM, MLPS…MSLL, and VLGA…VFLA.

Belongs to the CobS family. The cofactor is Mg(2+).

Its subcellular location is the cell inner membrane. It catalyses the reaction alpha-ribazole + adenosylcob(III)inamide-GDP = adenosylcob(III)alamin + GMP + H(+). The enzyme catalyses alpha-ribazole 5'-phosphate + adenosylcob(III)inamide-GDP = adenosylcob(III)alamin 5'-phosphate + GMP + H(+). Its pathway is cofactor biosynthesis; adenosylcobalamin biosynthesis; adenosylcobalamin from cob(II)yrinate a,c-diamide: step 7/7. Joins adenosylcobinamide-GDP and alpha-ribazole to generate adenosylcobalamin (Ado-cobalamin). Also synthesizes adenosylcobalamin 5'-phosphate from adenosylcobinamide-GDP and alpha-ribazole 5'-phosphate. This Chlorobium phaeobacteroides (strain BS1) protein is Adenosylcobinamide-GDP ribazoletransferase.